We begin with the raw amino-acid sequence, 322 residues long: Gluconeogenesis factor (322 aa).

Belongs to the gluconeogenesis factor family.

The protein localises to the cytoplasm. Required for morphogenesis under gluconeogenic growth conditions. This Listeria monocytogenes serovar 1/2a (strain ATCC BAA-679 / EGD-e) protein is Gluconeogenesis factor.